The sequence spans 399 residues: Dual-specificity RNA methyltransferase RlmN (399 aa).

Glu-121 (proton acceptor) is an active-site residue. One can recognise a Radical SAM core domain in the interval 127 to 376 (DVDRGTLCVS…VRTPRGRDIL (250 aa)). Cys-134 and Cys-379 are oxidised to a cystine. Residues Cys-141, Cys-145, and Cys-148 each contribute to the [4Fe-4S] cluster site. Residues 205-206 (GE), Ser-237, 259-261 (SLH), and Asn-336 contribute to the S-adenosyl-L-methionine site. Cys-379 (S-methylcysteine intermediate) is an active-site residue.

This sequence belongs to the radical SAM superfamily. RlmN family. Requires [4Fe-4S] cluster as cofactor.

It is found in the cytoplasm. It carries out the reaction adenosine(2503) in 23S rRNA + 2 reduced [2Fe-2S]-[ferredoxin] + 2 S-adenosyl-L-methionine = 2-methyladenosine(2503) in 23S rRNA + 5'-deoxyadenosine + L-methionine + 2 oxidized [2Fe-2S]-[ferredoxin] + S-adenosyl-L-homocysteine. The catalysed reaction is adenosine(37) in tRNA + 2 reduced [2Fe-2S]-[ferredoxin] + 2 S-adenosyl-L-methionine = 2-methyladenosine(37) in tRNA + 5'-deoxyadenosine + L-methionine + 2 oxidized [2Fe-2S]-[ferredoxin] + S-adenosyl-L-homocysteine. Its function is as follows. Specifically methylates position 2 of adenine 2503 in 23S rRNA and position 2 of adenine 37 in tRNAs. m2A2503 modification seems to play a crucial role in the proofreading step occurring at the peptidyl transferase center and thus would serve to optimize ribosomal fidelity. The protein is Dual-specificity RNA methyltransferase RlmN of Methylocella silvestris (strain DSM 15510 / CIP 108128 / LMG 27833 / NCIMB 13906 / BL2).